The following is a 190-amino-acid chain: Shikimate kinase (190 aa).

26–31 (GSGKST) is a binding site for ATP. S30 contacts Mg(2+). Substrate is bound by residues D48, R72, and G94. R133 is an ATP binding site. R152 is a binding site for substrate.

Belongs to the shikimate kinase family. In terms of assembly, monomer. Requires Mg(2+) as cofactor.

It localises to the cytoplasm. It carries out the reaction shikimate + ATP = 3-phosphoshikimate + ADP + H(+). Its pathway is metabolic intermediate biosynthesis; chorismate biosynthesis; chorismate from D-erythrose 4-phosphate and phosphoenolpyruvate: step 5/7. Functionally, catalyzes the specific phosphorylation of the 3-hydroxyl group of shikimic acid using ATP as a cosubstrate. The chain is Shikimate kinase from Prochlorococcus marinus (strain SARG / CCMP1375 / SS120).